A 672-amino-acid polypeptide reads, in one-letter code: DNA ligase (672 aa).

Residues 32–36, 81–82, and Glu113 each bind NAD(+); these read DAEYD and SL. Residue Lys115 is the N6-AMP-lysine intermediate of the active site. NAD(+)-binding residues include Arg136, Glu173, Lys290, and Lys314. Residues Cys408, Cys411, Cys426, and Cys432 each coordinate Zn(2+). Residues 594–672 form the BRCT domain; it reads EIDSPFAGKT…EAEMLRLLGE (79 aa).

The protein belongs to the NAD-dependent DNA ligase family. LigA subfamily. Requires Mg(2+) as cofactor. Mn(2+) is required as a cofactor.

The catalysed reaction is NAD(+) + (deoxyribonucleotide)n-3'-hydroxyl + 5'-phospho-(deoxyribonucleotide)m = (deoxyribonucleotide)n+m + AMP + beta-nicotinamide D-nucleotide.. In terms of biological role, DNA ligase that catalyzes the formation of phosphodiester linkages between 5'-phosphoryl and 3'-hydroxyl groups in double-stranded DNA using NAD as a coenzyme and as the energy source for the reaction. It is essential for DNA replication and repair of damaged DNA. The polypeptide is DNA ligase (Cronobacter sakazakii (strain ATCC BAA-894) (Enterobacter sakazakii)).